Here is a 230-residue protein sequence, read N- to C-terminus: UPF0500 protein C1orf216 homolog (230 aa).

Residues Met-1 to Ser-103 form a disordered region. Residues Arg-60–Gln-73 show a composition bias toward polar residues. A compositionally biased stretch (low complexity) spans Pro-85–Ala-94.

It belongs to the UPF0500 family.

The polypeptide is UPF0500 protein C1orf216 homolog (Mus musculus (Mouse)).